The sequence spans 641 residues: Threonine--tRNA ligase (641 aa).

Residues 1–61 (MPAITLPDGS…ADDASVRFIT (61 aa)) form the TGS domain. A catalytic region spans residues 243–536 (DHRRIGREMD…LIEQHAGRFP (294 aa)). Positions 336, 387, and 513 each coordinate Zn(2+).

This sequence belongs to the class-II aminoacyl-tRNA synthetase family. As to quaternary structure, homodimer. Zn(2+) is required as a cofactor.

The protein localises to the cytoplasm. The enzyme catalyses tRNA(Thr) + L-threonine + ATP = L-threonyl-tRNA(Thr) + AMP + diphosphate + H(+). Catalyzes the attachment of threonine to tRNA(Thr) in a two-step reaction: L-threonine is first activated by ATP to form Thr-AMP and then transferred to the acceptor end of tRNA(Thr). Also edits incorrectly charged L-seryl-tRNA(Thr). This Gluconacetobacter diazotrophicus (strain ATCC 49037 / DSM 5601 / CCUG 37298 / CIP 103539 / LMG 7603 / PAl5) protein is Threonine--tRNA ligase.